A 586-amino-acid chain; its full sequence is Putative ABC transporter ATP-binding protein MG187 homolog (586 aa).

The region spanning 13 to 464 (IEFKNIVVDF…PANEFVATFL (452 aa)) is the ABC transporter domain. 45-52 (GPSGCGKT) contributes to the ATP binding site.

The protein belongs to the ABC transporter superfamily.

The sequence is that of Putative ABC transporter ATP-binding protein MG187 homolog from Mycoplasma pneumoniae (strain ATCC 29342 / M129 / Subtype 1) (Mycoplasmoides pneumoniae).